Reading from the N-terminus, the 500-residue chain is Cytochrome P450 71D7 (500 aa).

Residue C441 coordinates heme.

The protein belongs to the cytochrome P450 family. Requires heme as cofactor.

The polypeptide is Cytochrome P450 71D7 (CYP71D7) (Solanum chacoense (Chaco potato)).